We begin with the raw amino-acid sequence, 101 residues long: Movement protein (101 aa).

Residues 30 to 50 traverse the membrane as a helical segment; that stretch reads EVAILSFVALICFYLLYLWVL. Residues 75–101 form a disordered region; it reads VDRSNPIPNLPAPPSQGNPGPFVPGTG.

The protein belongs to the mastrevirus movement protein family. In terms of assembly, interacts with the capsid protein (CP). Part of a MP-CP-viral DNA complex.

The protein localises to the host membrane. Involved in the viral transport within, and between cells. The chain is Movement protein from Maize streak virus genotype A (isolate South Africa) (MSV).